The sequence spans 467 residues: 3-isopropylmalate dehydratase large subunit (467 aa).

3 residues coordinate [4Fe-4S] cluster: Cys349, Cys409, and Cys412.

Belongs to the aconitase/IPM isomerase family. LeuC type 1 subfamily. Heterodimer of LeuC and LeuD. [4Fe-4S] cluster is required as a cofactor.

The enzyme catalyses (2R,3S)-3-isopropylmalate = (2S)-2-isopropylmalate. It functions in the pathway amino-acid biosynthesis; L-leucine biosynthesis; L-leucine from 3-methyl-2-oxobutanoate: step 2/4. Functionally, catalyzes the isomerization between 2-isopropylmalate and 3-isopropylmalate, via the formation of 2-isopropylmaleate. The chain is 3-isopropylmalate dehydratase large subunit from Vibrio cholerae serotype O1 (strain ATCC 39541 / Classical Ogawa 395 / O395).